Consider the following 229-residue polypeptide: Uracil-DNA glycosylase (229 aa).

Asp-64 acts as the Proton acceptor in catalysis.

Belongs to the uracil-DNA glycosylase (UDG) superfamily. UNG family.

It is found in the cytoplasm. It carries out the reaction Hydrolyzes single-stranded DNA or mismatched double-stranded DNA and polynucleotides, releasing free uracil.. Excises uracil residues from the DNA which can arise as a result of misincorporation of dUMP residues by DNA polymerase or due to deamination of cytosine. This Salmonella agona (strain SL483) protein is Uracil-DNA glycosylase.